Reading from the N-terminus, the 143-residue chain is Large ribosomal subunit protein uL15 (143 aa).

The interval 1–59 (MELNGIKPADGAKHYKRRVGRGIGSGIGKTAGRGHKGQKSRAGGYHKVGFEGGQMPMQR) is disordered. A compositionally biased stretch (gly residues) spans 21 to 31 (RGIGSGIGKTA).

Belongs to the universal ribosomal protein uL15 family. As to quaternary structure, part of the 50S ribosomal subunit.

Binds to the 23S rRNA. In Albidiferax ferrireducens (strain ATCC BAA-621 / DSM 15236 / T118) (Rhodoferax ferrireducens), this protein is Large ribosomal subunit protein uL15.